The following is a 220-amino-acid chain: Type II restriction enzyme NspV (220 aa).

The catalysed reaction is Endonucleolytic cleavage of DNA to give specific double-stranded fragments with terminal 5'-phosphates.. Functionally, a P subtype restriction enzyme that recognizes the double-stranded sequence 5'-TTCGAA-3' and cleaves after T-2. The polypeptide is Type II restriction enzyme NspV (Nostoc sp. (strain ATCC 29411 / PCC 7524)).